An 86-amino-acid polypeptide reads, in one-letter code: NADH-ubiquinone oxidoreductase chain 4L (86 aa).

Helical transmembrane passes span 22–42 (LLVTLLSFEFLILLLFSLLVY) and 52–72 (FIFLSVTVCEGALGLSVLVSL).

The protein belongs to the complex I subunit 4L family.

Its subcellular location is the mitochondrion membrane. The enzyme catalyses a ubiquinone + NADH + 5 H(+)(in) = a ubiquinol + NAD(+) + 4 H(+)(out). In terms of biological role, core subunit of the mitochondrial membrane respiratory chain NADH dehydrogenase (Complex I) that is believed to belong to the minimal assembly required for catalysis. Complex I functions in the transfer of electrons from NADH to the respiratory chain. The immediate electron acceptor for the enzyme is believed to be ubiquinone. The chain is NADH-ubiquinone oxidoreductase chain 4L (ND4L) from Artemia salina (Brine shrimp).